The following is a 1004-amino-acid chain: Protein Wnt-5 (1004 aa).

The N-terminal stretch at 1–29 (MSCYRKRHFLLWLLRAVCMLHLTARGAYA) is a signal peptide. N60, N66, N115, and N219 each carry an N-linked (GlcNAc...) asparagine glycan. The tract at residues 238 to 298 (QKDKAKTSGA…NPGEQPIGGY (61 aa)) is disordered. N-linked (GlcNAc...) asparagine glycosylation is found at N307 and N341. Positions 310–407 (LLKPTDTDSH…ERDEWFRGQS (98 aa)) are disordered. Basic and acidic residues predominate over residues 389–403 (RREEQQRQRERDEWF). N422 is a glycosylation site (N-linked (GlcNAc...) asparagine). Residues 438 to 472 (KVSSEGSDGELLSRVERSQPSISSSSSSSSSSSRK) form a disordered region. Residues 458–470 (SISSSSSSSSSSS) are compositionally biased toward low complexity. N-linked (GlcNAc...) asparagine glycans are attached at residues N484, N485, N528, and N593. Cystine bridges form between C583-C594, C633-C641, and C643-C661. N724 carries N-linked (GlcNAc...) asparagine glycosylation. A disordered region spans residues 790 to 822 (FFKGEQQPRKKKRKNQRAAADAPAYPRNGIKES). Disulfide bonds link C862–C876, C864–C871, C933–C964, C949–C959, C963–C1003, C979–C994, C981–C991, and C986–C987. S868 carries the O-palmitoleoyl serine; by PORCN lipid modification. N952 carries an N-linked (GlcNAc...) asparagine glycan.

Belongs to the Wnt family. As to quaternary structure, interacts with porcupine (por). Glycosylated, glycosylation is stimulated by porcupine at the ER. In terms of processing, palmitoleoylated by porcupine. The lipid group functions as a sorting signal, targeting the ligand to polarized vesicles that transport Wnt5 to unique sites at the cell surface. Depalmitoleoylated by notum, leading to inhibit Wnt signaling pathway. Dynamic expression pattern during embryogenesis. Expression is seen in the limb primordia of the head and thoracic segments, mesodermal and neurogenic regions.

The protein resides in the secreted. Its subcellular location is the extracellular space. It is found in the extracellular matrix. Binds as a ligand to a family of frizzled seven-transmembrane receptors and acts through a cascade of genes on the nucleus. Probable developmental protein. May be a signaling molecule which affects the development of discrete regions of tissues. Is likely to signal over only few cell diameters. May have a role in limb and CNS development; may be a downstream target of Dll that acts in the specification of these primordia. The polypeptide is Protein Wnt-5 (Wnt5) (Drosophila melanogaster (Fruit fly)).